A 124-amino-acid chain; its full sequence is Small ribosomal subunit protein uS12 (124 aa).

A 3-methylthioaspartic acid modification is found at aspartate 89. Residues 105–124 form a disordered region; that stretch reads SGVSDRRQGRSKYGAKRPKS. Over residues 113 to 124 the composition is skewed to basic residues; sequence GRSKYGAKRPKS.

The protein belongs to the universal ribosomal protein uS12 family. As to quaternary structure, part of the 30S ribosomal subunit. Contacts proteins S8 and S17. May interact with IF1 in the 30S initiation complex.

With S4 and S5 plays an important role in translational accuracy. Functionally, interacts with and stabilizes bases of the 16S rRNA that are involved in tRNA selection in the A site and with the mRNA backbone. Located at the interface of the 30S and 50S subunits, it traverses the body of the 30S subunit contacting proteins on the other side and probably holding the rRNA structure together. The combined cluster of proteins S8, S12 and S17 appears to hold together the shoulder and platform of the 30S subunit. This Colwellia psychrerythraea (strain 34H / ATCC BAA-681) (Vibrio psychroerythus) protein is Small ribosomal subunit protein uS12.